The sequence spans 220 residues: Inner membrane protein YqjA (220 aa).

Residues 1 to 27 lie on the Periplasmic side of the membrane; it reads MELLTQLLQALWAQDFETLANPSMIGM. A helical transmembrane segment spans residues 28-48; sequence LYFVLFVILFLENGLLPAAFL. The Cytoplasmic segment spans residues 49 to 52; the sequence is PGDS. 2 consecutive transmembrane segments (helical) span residues 53–73 and 74–94; these read LLVL…QTIL and LLTV…RWLG. Topologically, residues 95 to 154 are cytoplasmic; that stretch reads NTRTVQNWLSHLPAHYHQRAHHLFHKHGLSALLIGRFIAFVRTLLPTIAGLSGLNNARFQ. Residues 155 to 175 form a helical membrane-spanning segment; it reads FFNWMSGLLWVLILTTLGYML. The Periplasmic portion of the chain corresponds to 176–191; sequence GKTPVFLKYEDQLMSC. The chain crosses the membrane as a helical span at residues 192–212; it reads LMLLPVVLLVFGLAGSLVVLW. Residues 213–220 lie on the Cytoplasmic side of the membrane; that stretch reads KKKYGNRG.

It belongs to the DedA family.

Its subcellular location is the cell inner membrane. In terms of biological role, may be a membrane transporter required for proton motive force (PMF)-dependent drug efflux. Required, with YghB, for the proper export of certain periplasmic amidases and, possibly, other Tat substrates. May play a role in determining membrane lipid composition. The sequence is that of Inner membrane protein YqjA (yqjA) from Escherichia coli (strain K12).